Consider the following 389-residue polypeptide: Sulfate adenylyltransferase (389 aa).

It belongs to the sulfate adenylyltransferase family.

It carries out the reaction sulfate + ATP + H(+) = adenosine 5'-phosphosulfate + diphosphate. It functions in the pathway sulfur metabolism; hydrogen sulfide biosynthesis; sulfite from sulfate: step 1/3. The chain is Sulfate adenylyltransferase from Hyperthermus butylicus (strain DSM 5456 / JCM 9403 / PLM1-5).